A 329-amino-acid chain; its full sequence is Probable carboxylesterase 8 (329 aa).

Positions 73–75 (HGG) match the Involved in the stabilization of the negatively charged intermediate by the formation of the oxyanion hole motif. Residues S161, D264, and H294 contribute to the active site.

It belongs to the 'GDXG' lipolytic enzyme family. In terms of tissue distribution, expressed in leaves, stems, flowers and siliques.

The enzyme catalyses a carboxylic ester + H2O = an alcohol + a carboxylate + H(+). In terms of biological role, carboxylesterase acting on esters with varying acyl chain length. This Arabidopsis thaliana (Mouse-ear cress) protein is Probable carboxylesterase 8 (CXE8).